The primary structure comprises 228 residues: Lipoprotein-releasing system ATP-binding protein LolD (228 aa).

The ABC transporter domain occupies 7 to 227 (LQLSGIERHY…TIEDGKVVEL (221 aa)). 43-50 (APSGTGKS) is an ATP binding site.

Belongs to the ABC transporter superfamily. Lipoprotein translocase (TC 3.A.1.125) family. In terms of assembly, the complex is composed of two ATP-binding proteins (LolD) and two transmembrane proteins (LolC and LolE).

It is found in the cell inner membrane. Functionally, part of the ABC transporter complex LolCDE involved in the translocation of mature outer membrane-directed lipoproteins, from the inner membrane to the periplasmic chaperone, LolA. Responsible for the formation of the LolA-lipoprotein complex in an ATP-dependent manner. The protein is Lipoprotein-releasing system ATP-binding protein LolD of Rhizobium meliloti (strain 1021) (Ensifer meliloti).